Reading from the N-terminus, the 491-residue chain is MDTSVLLLLAVLLSFLLFLVRGHAKVHGHLPPGPRPLPLLGNLLQMDRGGFRKSFIQLQEKHGDVFTVYFGPRPVVMLCGTQTIREALVDHAEAFSGRGIIAVLQPIMQEYGVSFVNEERWKILRRLFVATMRDFGIGKQSVEDQIKEEAKCLVEELKNHQGVSLDPTFLFQCVTGNIICSIVFGERFDYRDRQFLRLLDLLYRTFSLISSFSSQMFEVYSDFLKYFPGVHREIYKNLKEVLDYIDHSVENHRATLDPNAPRDFIDTFLLHMEKEKLNHYTEFHHWNLMISVLFLFLAGTESTSNTLCYGFLLMLKYPHVAEKVQKEIDQVIGSQRVPTLDDRSKMPYTEAVIHEIQRFSDVSPMGLPCRITKDTLFRGYLLPKNTEVYFILSSALHDPQYFEQPDTFNPEHFLDANGALKKCEAFMPFSIGKRMCLGEGIARSELFLFFTTILQNYSVSSPVDPNTIDMTPKESGLAKVAPVYKICFVAR.

Cysteine 436 is a binding site for heme.

It belongs to the cytochrome P450 family. The cofactor is heme. Liver. Not found in the lung, kidney and prostate.

Its subcellular location is the endoplasmic reticulum membrane. The protein resides in the microsome membrane. It catalyses the reaction an organic molecule + reduced [NADPH--hemoprotein reductase] + O2 = an alcohol + oxidized [NADPH--hemoprotein reductase] + H2O + H(+). In terms of biological role, cytochromes P450 are a group of heme-thiolate monooxygenases. In liver microsomes, this enzyme is involved in an NADPH-dependent electron transport pathway. It oxidizes a variety of structurally unrelated compounds, including steroids, fatty acids, and xenobiotics. In Rattus norvegicus (Rat), this protein is Cytochrome P450 2B3 (Cyp2b3).